The chain runs to 473 residues: MSSNNGDVRLWGGRFADGPADALARLSASVHFDWRLAPYDIAGSRAHARVLNRAGLLTEDELTRMLAGLDRWPPMWRTLLHRTIADEDVHTALERGLLERLGAELGGKLRAGRSRNDQVATLFRMYLRTTPGSSGLIAELQDALVGLAEAHPEVAMPGRTHLQHAQPVLFAHHVLAHVQALSRDAERLRQWDARTAVSPYGSGALAGSSLGLDPEAVAADLGFEGGSAGNSIDGTASRDFVAEFAFITAMAGINLSRLAEEIIIWNTKEFSFVTLHDAFSTGSSIMPQKKNPDIAELARGKSGRLIGNLTGLLATLKALPLAYNRDLQEDKEPVFDSCDQLEVLLPAFTGMVATLTVHRERMEELAPAGFSLATDIAEWLVRQGVPFRVAHDVAGACVKECESAGIELHQLTDEQFAAISEHLTPEVRSVLTVRGALASRDGRGGTAPSAVAVQLAEVKADLAVQHAWAARES.

The protein belongs to the lyase 1 family. Argininosuccinate lyase subfamily.

The protein localises to the cytoplasm. The enzyme catalyses 2-(N(omega)-L-arginino)succinate = fumarate + L-arginine. It functions in the pathway amino-acid biosynthesis; L-arginine biosynthesis; L-arginine from L-ornithine and carbamoyl phosphate: step 3/3. This chain is Argininosuccinate lyase, found in Streptomyces clavuligerus.